Reading from the N-terminus, the 540-residue chain is Chaperonin GroEL (540 aa).

ATP is bound by residues 29 to 32, 86 to 90, G413, 476 to 478, and D492; these read TLGP, DGTTT, and NAA.

It belongs to the chaperonin (HSP60) family. Forms a cylinder of 14 subunits composed of two heptameric rings stacked back-to-back. Interacts with the co-chaperonin GroES.

It localises to the cytoplasm. It carries out the reaction ATP + H2O + a folded polypeptide = ADP + phosphate + an unfolded polypeptide.. Together with its co-chaperonin GroES, plays an essential role in assisting protein folding. The GroEL-GroES system forms a nano-cage that allows encapsulation of the non-native substrate proteins and provides a physical environment optimized to promote and accelerate protein folding. The chain is Chaperonin GroEL from Streptococcus pneumoniae (strain ATCC 700669 / Spain 23F-1).